A 131-amino-acid polypeptide reads, in one-letter code: UPF0146 protein PH0209 (131 aa).

The protein belongs to the UPF0146 family.

This is UPF0146 protein PH0209 from Pyrococcus horikoshii (strain ATCC 700860 / DSM 12428 / JCM 9974 / NBRC 100139 / OT-3).